The following is a 75-amino-acid chain: Small ribosomal subunit protein bS18 (75 aa).

It belongs to the bacterial ribosomal protein bS18 family. In terms of assembly, part of the 30S ribosomal subunit. Forms a tight heterodimer with protein bS6.

Functionally, binds as a heterodimer with protein bS6 to the central domain of the 16S rRNA, where it helps stabilize the platform of the 30S subunit. The sequence is that of Small ribosomal subunit protein bS18 from Saccharophagus degradans (strain 2-40 / ATCC 43961 / DSM 17024).